The following is a 447-amino-acid chain: Zinc finger protein ZIC 1 (447 aa).

A C2H2-type 1; atypical zinc finger spans residues 225-260 (LICKWIEPEQLANPKKSCNKTFSTMHELVTHVTVEH). The C2H2-type 2; atypical zinc-finger motif lies at 269 to 296 (HICFWEECPREGKPFKAKYKLVNHIRVH). C2H2-type zinc fingers lie at residues 302–326 (FPCP…KRTH), 332–356 (FKCE…MHVH), and 362–384 (YLCK…MKVH). Residues 375 to 434 (SSLRKHMKVHESSSQGSQPSPAASSGYESSTPPTIVSPTTDNPTTSSMSPSSSAVHHTAG) are disordered. Residues 386 to 427 (SSSQGSQPSPAASSGYESSTPPTIVSPTTDNPTTSSMSPSSS) show a composition bias toward low complexity.

Belongs to the GLI C2H2-type zinc-finger protein family. As to quaternary structure, interacts (via the C2H2-type domains 3, 4 and 5) with MDFIC (via the C2H2-type domains 3, 4 and 5). Interacts with GLI1; the interaction enhances transcription activation. Interacts with GLI2. Interacts with GLI3; the interaction enhances transcription activation. In terms of tissue distribution, expressed in osteoblasts (at protein level). Expressed in the CNS. A high level expression is seen in the cerebellum, while a low level expression is seen in the olfactory bulb, diencephalon, and brainstem. Expressed in lumbar spine and iliac crest.

It is found in the nucleus. Its subcellular location is the cytoplasm. Its function is as follows. Acts as a transcriptional activator. Involved in neurogenesis. Plays important roles in the early stage of organogenesis of the CNS, as well as during dorsal spinal cord development and maturation of the cerebellum. Involved in the spatial distribution of mossy fiber (MF) neurons within the pontine gray nucleus (PGN). Plays a role in the regulation of MF axon pathway choice. Promotes MF migration towards ipsilaterally-located cerebellar territories. May have a role in shear flow mechanotransduction in osteocytes. Retains nuclear GLI1 and GLI3 in the cytoplasm. Binds to the minimal GLI-consensus sequence 5'-TGGGTGGTC-3'. This chain is Zinc finger protein ZIC 1 (Zic1), found in Mus musculus (Mouse).